Reading from the N-terminus, the 339-residue chain is Deubiquitinase and deneddylase Dub2 (339 aa).

The helical transmembrane segment at 36 to 56 threads the bilayer; sequence IIIALFLIVISCGLILCAYTF. Active-site residues include histidine 203, aspartate 220, and cysteine 282.

It belongs to the peptidase C48 family.

It localises to the secreted. The protein resides in the host cell. Its subcellular location is the membrane. Effector proteins function to alter host cell physiology and promote bacterial survival in host tissues. This protease possesses deubiquitinating and deneddylating activities. The chain is Deubiquitinase and deneddylase Dub2 (cdu2) from Chlamydia trachomatis serovar B (strain Jali20/OT).